A 342-amino-acid polypeptide reads, in one-letter code: DNA primase small subunit PriS (342 aa).

Active-site residues include D97, D99, and D236.

Belongs to the eukaryotic-type primase small subunit family. Heterodimer of a small subunit (PriS) and a large subunit (PriL). The cofactor is Mg(2+). Requires Mn(2+) as cofactor.

Catalytic subunit of DNA primase, an RNA polymerase that catalyzes the synthesis of short RNA molecules used as primers for DNA polymerase during DNA replication. The small subunit contains the primase catalytic core and has DNA synthesis activity on its own. Binding to the large subunit stabilizes and modulates the activity, increasing the rate of DNA synthesis while decreasing the length of the DNA fragments, and conferring RNA synthesis capability. The DNA polymerase activity may enable DNA primase to also catalyze primer extension after primer synthesis. May also play a role in DNA repair. In Aeropyrum pernix (strain ATCC 700893 / DSM 11879 / JCM 9820 / NBRC 100138 / K1), this protein is DNA primase small subunit PriS.